Reading from the N-terminus, the 436-residue chain is MVPEPGPVNSSTPAWGPGPPPAPGGSGWVAAALCVVIVLTAAANSLLIVLICTQPALRNTSNFFLVSLFTSDLMVGLVVMPPAMLNALYGRWVLARGLCLLWTAFDVMCCSASILNLCLISLDRYLLILSPLRYKLRMTAPRALALILGAWSLAALASFLPLLLGWHELGKARTPAPGQCRLLASLPFVLVASGVTFFLPSGAICFTYCRILLAARKQAVQVASLTTGTAGQALETLQVPRTPRPGMESADSRRLATKHSRKALKASLTLGILLGMFFVTWLPFFVANIAQAVCDCISPGLFDVLTWLGYCNSTMNPIIYPLFMRDFKRALGRFLPCVHCPPEHRPALPPPPCGPLTAVPDQASACSRCCLCLCRQTQIQTPLQGAPRACSSQPSFCCLERPPGTPRHPPGPPLWSTSLSQTLWSLRYGRIHSVPP.

At 1 to 27 the chain is on the extracellular side; the sequence is MVPEPGPVNSSTPAWGPGPPPAPGGSG. N-linked (GlcNAc...) asparagine glycosylation occurs at Asn-9. A helical transmembrane segment spans residues 28–52; sequence WVAAALCVVIVLTAAANSLLIVLIC. The Cytoplasmic segment spans residues 53–62; that stretch reads TQPALRNTSN. A helical transmembrane segment spans residues 63–88; that stretch reads FFLVSLFTSDLMVGLVVMPPAMLNAL. Residues 89 to 96 lie on the Extracellular side of the membrane; sequence YGRWVLAR. Residues 97–122 form a helical membrane-spanning segment; the sequence is GLCLLWTAFDVMCCSASILNLCLISL. Cysteines 99 and 180 form a disulfide. Asp-106 lines the serotonin pocket. Residues 123–142 are Cytoplasmic-facing; that stretch reads DRYLLILSPLRYKLRMTAPR. The chain crosses the membrane as a helical span at residues 143–167; it reads ALALILGAWSLAALASFLPLLLGWH. The Extracellular portion of the chain corresponds to 168–185; sequence ELGKARTPAPGQCRLLAS. A helical transmembrane segment spans residues 186 to 209; the sequence is LPFVLVASGVTFFLPSGAICFTYC. Over 210 to 266 the chain is Cytoplasmic; it reads RILLAARKQAVQVASLTTGTAGQALETLQVPRTPRPGMESADSRRLATKHSRKALKA. A helical transmembrane segment spans residues 267-293; it reads SLTLGILLGMFFVTWLPFFVANIAQAV. Asn-288 is a serotonin binding site. At 294 to 299 the chain is on the extracellular side; the sequence is CDCISP. A helical membrane pass occupies residues 300–323; the sequence is GLFDVLTWLGYCNSTMNPIIYPLF. The Cytoplasmic segment spans residues 324 to 436; the sequence is MRDFKRALGR…RYGRIHSVPP (113 aa).

This sequence belongs to the G-protein coupled receptor 1 family. As to quaternary structure, interacts with MTOR, RPTOR and NF1. Interacts with CDK5. As to expression, localized exclusively in the central nervous system, predominantly in the corpus striatum but also in various limbic and cortical regions.

The protein localises to the cell membrane. In terms of biological role, G-protein coupled receptor for 5-hydroxytryptamine (serotonin), a biogenic hormone that functions as a neurotransmitter, a hormone and a mitogen. Also has a high affinity for tricyclic psychotropic drugs. Ligand binding causes a conformation change that triggers signaling via guanine nucleotide-binding proteins (G proteins) and modulates the activity of downstream effectors. HTR6 is coupled to G(s) G alpha proteins and mediates activation of adenylate cyclase activity. Controls pyramidal neurons migration during corticogenesis, through the regulation of CDK5 activity. Is an activator of mTOR signaling. This is 5-hydroxytryptamine receptor 6 (Htr6) from Rattus norvegicus (Rat).